The following is a 229-amino-acid chain: Ribonuclease 3 (229 aa).

Residues 5–127 (LDRLERKLGY…LIGAIYLDTG (123 aa)) enclose the RNase III domain. Mg(2+) is bound at residue E40. Residue D44 is part of the active site. Mg(2+) is bound by residues D113 and E116. E116 is an active-site residue. One can recognise a DRBM domain in the interval 154–224 (DPKTRLQEFL…AAAALVALGV (71 aa)).

The protein belongs to the ribonuclease III family. Homodimer. The cofactor is Mg(2+).

Its subcellular location is the cytoplasm. It catalyses the reaction Endonucleolytic cleavage to 5'-phosphomonoester.. Functionally, digests double-stranded RNA. Involved in the processing of primary rRNA transcript to yield the immediate precursors to the large and small rRNAs (23S and 16S). Processes some mRNAs, and tRNAs when they are encoded in the rRNA operon. Processes pre-crRNA and tracrRNA of type II CRISPR loci if present in the organism. The sequence is that of Ribonuclease 3 from Pseudomonas aeruginosa (strain LESB58).